A 446-amino-acid polypeptide reads, in one-letter code: Phosphoglucosamine mutase (446 aa).

Residue Ser-104 is the Phosphoserine intermediate of the active site. Positions 104, 241, 243, and 245 each coordinate Mg(2+). Phosphoserine is present on Ser-104.

The protein belongs to the phosphohexose mutase family. Requires Mg(2+) as cofactor. Activated by phosphorylation.

It carries out the reaction alpha-D-glucosamine 1-phosphate = D-glucosamine 6-phosphate. In terms of biological role, catalyzes the conversion of glucosamine-6-phosphate to glucosamine-1-phosphate. The sequence is that of Phosphoglucosamine mutase from Teredinibacter turnerae (strain ATCC 39867 / T7901).